The chain runs to 102 residues: UPF0235 protein Swol_0959 (102 aa).

This sequence belongs to the UPF0235 family.

In Syntrophomonas wolfei subsp. wolfei (strain DSM 2245B / Goettingen), this protein is UPF0235 protein Swol_0959.